A 215-amino-acid chain; its full sequence is Secretory component protein psh3 (215 aa).

The Cytoplasmic portion of the chain corresponds to 1–21; the sequence is MAKRSIFRFADEKGLKVAARY. The chain crosses the membrane as a helical span at residues 22-42; sequence GVLMSTSFIFALLFHSSVADV. Residues 43 to 67 lie on the Extracellular side of the membrane; that stretch reads NTLWSPGPESAFDAAETYYTLVAGS. A helical transmembrane segment spans residues 68 to 88; the sequence is HFIVKYTVYTIMGLNMIFHLI. Residues 89 to 105 lie on the Cytoplasmic side of the membrane; sequence QATGAKGDDKLFFYSST. The helical transmembrane segment at 106–126 threads the bilayer; it reads LLYLTALILFIVNVAPSMLVV. Topologically, residues 127 to 147 are extracellular; sequence KLQNYVQFPRNMHLSVLAASH. A helical transmembrane segment spans residues 148 to 168; the sequence is VLVEFLLAGVILIQLGYVFGY. The Cytoplasmic portion of the chain corresponds to 169-215; the sequence is HVQSIQQREYAEDMREQELAEKAKLESESATTQSVETVSTESVSKRK. Residues 190 to 215 form a disordered region; it reads KAKLESESATTQSVETVSTESVSKRK. Residues 196 to 215 are compositionally biased toward low complexity; sequence ESATTQSVETVSTESVSKRK.

To yeast SHR3. In terms of assembly, monomer.

The protein localises to the endoplasmic reticulum membrane. Involved in amino acid permease processing and required for the efficient translocation of structurally related amino acid permeases from the endoplasmic reticulum to the plasma membrane. The protein is Secretory component protein psh3 (psh3) of Schizosaccharomyces pombe (strain 972 / ATCC 24843) (Fission yeast).